A 100-amino-acid chain; its full sequence is Large ribosomal subunit protein bL27 (100 aa).

Residues 1–9 (MLKMNLQLF) constitute a propeptide that is removed on maturation.

The protein belongs to the bacterial ribosomal protein bL27 family. Post-translationally, the N-terminus is cleaved by ribosomal processing cysteine protease Prp.

The chain is Large ribosomal subunit protein bL27 from Clostridium perfringens (strain ATCC 13124 / DSM 756 / JCM 1290 / NCIMB 6125 / NCTC 8237 / Type A).